Reading from the N-terminus, the 145-residue chain is UPF0179 protein MmarC6_0993 (145 aa).

Belongs to the UPF0179 family.

The chain is UPF0179 protein MmarC6_0993 from Methanococcus maripaludis (strain C6 / ATCC BAA-1332).